Here is a 289-residue protein sequence, read N- to C-terminus: Protoheme IX farnesyltransferase 2 (289 aa).

The next 9 helical transmembrane spans lie at 1-21 (MIKPGIIMGNLISVTGGFLLA), 28-48 (LTLMLMTILGLSLVVASGCGL), 76-96 (YSVLVFSLALGLIGFGLLAIF), 100-120 (IALLFAVIGYLVYVGIYSLYM), 125-145 (VYGTLIGSFSGAVPPVVGYCA), 155-175 (VILLLMFSLWQMPHSYAIAIF), 199-219 (LHIVLYIAVFSLVSALLPLAG), 221-241 (TGIAFMAVTCATSLWWLGMAL), and 260-280 (CSIVTITALSIAMAMDFQLVV).

It belongs to the UbiA prenyltransferase family. Protoheme IX farnesyltransferase subfamily.

It localises to the cell inner membrane. It carries out the reaction heme b + (2E,6E)-farnesyl diphosphate + H2O = Fe(II)-heme o + diphosphate. Its pathway is porphyrin-containing compound metabolism; heme O biosynthesis; heme O from protoheme: step 1/1. Functionally, converts heme B (protoheme IX) to heme O by substitution of the vinyl group on carbon 2 of heme B porphyrin ring with a hydroxyethyl farnesyl side group. In Shewanella woodyi (strain ATCC 51908 / MS32), this protein is Protoheme IX farnesyltransferase 2.